Reading from the N-terminus, the 408-residue chain is Arginine biosynthesis bifunctional protein ArgJ (408 aa).

6 residues coordinate substrate: Thr162, Lys188, Thr199, Glu280, Asn403, and Ser408. Residue Thr199 is the Nucleophile of the active site.

This sequence belongs to the ArgJ family. In terms of assembly, heterotetramer of two alpha and two beta chains.

Its subcellular location is the cytoplasm. It catalyses the reaction N(2)-acetyl-L-ornithine + L-glutamate = N-acetyl-L-glutamate + L-ornithine. The catalysed reaction is L-glutamate + acetyl-CoA = N-acetyl-L-glutamate + CoA + H(+). The protein operates within amino-acid biosynthesis; L-arginine biosynthesis; L-ornithine and N-acetyl-L-glutamate from L-glutamate and N(2)-acetyl-L-ornithine (cyclic): step 1/1. It functions in the pathway amino-acid biosynthesis; L-arginine biosynthesis; N(2)-acetyl-L-ornithine from L-glutamate: step 1/4. Its function is as follows. Catalyzes two activities which are involved in the cyclic version of arginine biosynthesis: the synthesis of N-acetylglutamate from glutamate and acetyl-CoA as the acetyl donor, and of ornithine by transacetylation between N(2)-acetylornithine and glutamate. In Ruegeria pomeroyi (strain ATCC 700808 / DSM 15171 / DSS-3) (Silicibacter pomeroyi), this protein is Arginine biosynthesis bifunctional protein ArgJ.